Here is a 380-residue protein sequence, read N- to C-terminus: Cystathionine gamma-synthase (380 aa).

An N6-(pyridoxal phosphate)lysine modification is found at Lys-195.

Belongs to the trans-sulfuration enzymes family. In terms of assembly, homotetramer. Pyridoxal 5'-phosphate is required as a cofactor.

It localises to the cytoplasm. It carries out the reaction O-succinyl-L-homoserine + L-cysteine = L,L-cystathionine + succinate + H(+). It functions in the pathway amino-acid biosynthesis; L-methionine biosynthesis via de novo pathway; L-cystathionine from O-succinyl-L-homoserine: step 1/1. Its activity is regulated as follows. Four natural products, alpha-lapachone, 9-hydroxy-alpha-lapachone, Paulownin, and Yangambin, show strong inhibitory activities against CGS. All these four inhibitors prevent the binding of OSHS to CGS in a non-competitive fashion. These compounds are specific inhibitors against CGS from H.pylori relative to E.coli since they exhibit very low inhibition activities against CGS from E.coli. In terms of biological role, catalyzes the formation of L-cystathionine from O-succinyl-L-homoserine (OSHS) and L-cysteine, via a gamma-replacement reaction. In the absence of thiol, catalyzes gamma-elimination to form 2-oxobutanoate, succinate and ammonia. The polypeptide is Cystathionine gamma-synthase (metB) (Helicobacter pylori (Campylobacter pylori)).